The chain runs to 465 residues: Probable Xaa-Pro aminopeptidase pepP (465 aa).

Positions 261, 272, 395, and 435 each coordinate Mn(2+).

This sequence belongs to the peptidase M24B family. Mn(2+) serves as cofactor.

It carries out the reaction Release of any N-terminal amino acid, including proline, that is linked to proline, even from a dipeptide or tripeptide.. Catalyzes the removal of a penultimate prolyl residue from the N-termini of peptides. The sequence is that of Probable Xaa-Pro aminopeptidase pepP (pepP) from Talaromyces marneffei (strain ATCC 18224 / CBS 334.59 / QM 7333) (Penicillium marneffei).